The chain runs to 187 residues: Signal peptidase complex catalytic subunit SEC11 (187 aa).

The Cytoplasmic segment spans residues 1 to 18 (MLSSLSPYMANPRNTLSQ). Residues 19–39 (VLNFGLVLSSAFMVWKALSVI) form a helical; Signal-anchor for type II membrane protein membrane-spanning segment. Residues 40-187 (TNSASPVVVV…MGLMVMLQRE (148 aa)) lie on the Lumenal side of the membrane. Active-site charge relay system residues include Ser53 and His92. The N-linked (GlcNAc...) asparagine glycan is linked to Asn125. The Charge relay system role is filled by Asp129. The segment at 173–184 (VLLGFMGLMVML) is C-terminal short (CTS) helix.

It belongs to the peptidase S26B family. As to quaternary structure, component of the signal peptidase complex (SPC) composed of a catalytic subunit SEC11 and three accessory subunits SPC1, SPC2 and SPC3. The complex induces a local thinning of the ER membrane which is used to measure the length of the signal peptide (SP) h-region of protein substrates. This ensures the selectivity of the complex towards h-regions shorter than 18-20 amino acids. SPC associates with the translocon complex.

It is found in the endoplasmic reticulum membrane. The enzyme catalyses Cleavage of hydrophobic, N-terminal signal or leader sequences from secreted and periplasmic proteins.. In terms of biological role, catalytic component of the signal peptidase complex (SPC) which catalyzes the cleavage of N-terminal signal sequences from nascent proteins as they are translocated into the lumen of the endoplasmic reticulum. Specifically cleaves N-terminal signal peptides that contain a hydrophobic alpha-helix (h-region) shorter than 18-20 amino acids. The sequence is that of Signal peptidase complex catalytic subunit SEC11 (SEC11) from Ajellomyces capsulatus (strain NAm1 / WU24) (Darling's disease fungus).